Consider the following 978-residue polypeptide: Rab3 GTPase-activating protein catalytic subunit (978 aa).

Disordered regions lie at residues 533–554, 586–621, and 908–936; these read EGKKGNPLYSSSESSVNKTASD, HSDTEELKESGQESARKAKEETKENPSPKPEGRLHQ, and EEEPKRSSSSDDRRQTSGTDFPSPAGREL. Over residues 540–554 the composition is skewed to polar residues; the sequence is LYSSSESSVNKTASD. 2 stretches are compositionally biased toward basic and acidic residues: residues 586–619 and 909–922; these read HSDTEELKESGQESARKAKEETKENPSPKPEGRL and EEPKRSSSSDDRRQ.

It belongs to the Rab3-GAP catalytic subunit family. In terms of assembly, the Rab3 GTPase-activating complex is a heterodimer composed of rab3gap1 and rab3gap2. The Rab3 GTPase-activating complex interacts with DMXL2. Interacts with LMAN1.

It is found in the cytoplasm. It localises to the endoplasmic reticulum. The protein resides in the golgi apparatus. The protein localises to the cis-Golgi network. In terms of biological role, catalytic subunit of the Rab3 GTPase-activating (Rab3GAP) complex composed of rab3gap1 and rab3gap2, which has GTPase-activating protein (GAP) activity towards various Rab3 subfamily members (RAB3A, RAB3B, RAB3C and RAB3D), RAB5A and RAB43, and guanine nucleotide exchange factor (GEF) activity towards RAB18. As part of the Rab3GAP complex, acts as a GAP for Rab3 proteins by converting active RAB3-GTP to the inactive form RAB3-GDP. Rab3 proteins are involved in regulated exocytosis of neurotransmitters and hormones. The Rab3GAP complex, acts as a GEF for RAB18 by promoting the conversion of inactive RAB18-GDP to the active form RAB18-GTP. Recruits and stabilizes RAB18 at the cis-Golgi membrane where RAB18 is most likely activated. Also involved in RAB18 recruitment at the endoplasmic reticulum (ER) membrane where it maintains proper ER structure. Required for normal eye and brain development. May participate in neurodevelopmental processes such as proliferation, migration and differentiation before synapse formation, and non-synaptic vesicular release of neurotransmitters. This Xenopus laevis (African clawed frog) protein is Rab3 GTPase-activating protein catalytic subunit (rab3gap1).